Consider the following 155-residue polypeptide: Ribosomal RNA large subunit methyltransferase H (155 aa).

S-adenosyl-L-methionine-binding positions include L72, G103, and L122–L127.

This sequence belongs to the RNA methyltransferase RlmH family. Homodimer.

The protein localises to the cytoplasm. It carries out the reaction pseudouridine(1915) in 23S rRNA + S-adenosyl-L-methionine = N(3)-methylpseudouridine(1915) in 23S rRNA + S-adenosyl-L-homocysteine + H(+). In terms of biological role, specifically methylates the pseudouridine at position 1915 (m3Psi1915) in 23S rRNA. The polypeptide is Ribosomal RNA large subunit methyltransferase H (Haemophilus influenzae (strain PittGG)).